Reading from the N-terminus, the 444-residue chain is Tubulin beta-4A chain (444 aa).

The short motif at 1–4 is the MREI motif element; that stretch reads MREI. Gln-11, Glu-69, Ser-138, Gly-142, Thr-143, and Gly-144 together coordinate GTP. Glu-69 is a binding site for Mg(2+). Ser-172 bears the Phosphoserine; by CDK1 mark. 2 residues coordinate GTP: Asn-204 and Asn-226. Glu-436 is modified (5-glutamyl polyglutamate).

It belongs to the tubulin family. Dimer of alpha and beta chains. A typical microtubule is a hollow water-filled tube with an outer diameter of 25 nm and an inner diameter of 15 nM. Alpha-beta heterodimers associate head-to-tail to form protofilaments running lengthwise along the microtubule wall with the beta-tubulin subunit facing the microtubule plus end conferring a structural polarity. Microtubules usually have 13 protofilaments but different protofilament numbers can be found in some organisms and specialized cells. Mg(2+) serves as cofactor. In terms of processing, some glutamate residues at the C-terminus are polyglycylated, resulting in polyglycine chains on the gamma-carboxyl group. Glycylation is mainly limited to tubulin incorporated into axonemes (cilia and flagella) whereas glutamylation is prevalent in neuronal cells, centrioles, axonemes, and the mitotic spindle. Both modifications can coexist on the same protein on adjacent residues, and lowering polyglycylation levels increases polyglutamylation, and reciprocally. Cilia and flagella glycylation is required for their stability and maintenance. Flagella glycylation controls sperm motility. Post-translationally, some glutamate residues at the C-terminus are polyglutamylated, resulting in polyglutamate chains on the gamma-carboxyl group. Polyglutamylation plays a key role in microtubule severing by spastin (SPAST). SPAST preferentially recognizes and acts on microtubules decorated with short polyglutamate tails: severing activity by SPAST increases as the number of glutamates per tubulin rises from one to eight, but decreases beyond this glutamylation threshold. Glutamylation is also involved in cilia motility. Phosphorylated on Ser-172 by CDK1 during the cell cycle, from metaphase to telophase, but not in interphase. This phosphorylation inhibits tubulin incorporation into microtubules.

Its subcellular location is the cytoplasm. It localises to the cytoskeleton. In terms of biological role, tubulin is the major constituent of microtubules, a cylinder consisting of laterally associated linear protofilaments composed of alpha- and beta-tubulin heterodimers. Microtubules grow by the addition of GTP-tubulin dimers to the microtubule end, where a stabilizing cap forms. Below the cap, tubulin dimers are in GDP-bound state, owing to GTPase activity of alpha-tubulin. This chain is Tubulin beta-4A chain (TUBB4A), found in Bos taurus (Bovine).